We begin with the raw amino-acid sequence, 371 residues long: Pyruvate dehydrogenase E1 component subunit alpha (371 aa).

Heterodimer of an alpha and a beta chain. Requires thiamine diphosphate as cofactor.

The enzyme catalyses N(6)-[(R)-lipoyl]-L-lysyl-[protein] + pyruvate + H(+) = N(6)-[(R)-S(8)-acetyldihydrolipoyl]-L-lysyl-[protein] + CO2. In terms of biological role, the pyruvate dehydrogenase complex catalyzes the overall conversion of pyruvate to acetyl-CoA and CO(2). It contains multiple copies of three enzymatic components: pyruvate dehydrogenase (E1), dihydrolipoamide acetyltransferase (E2) and lipoamide dehydrogenase (E3). The sequence is that of Pyruvate dehydrogenase E1 component subunit alpha from Bacillus cereus.